Here is a 153-residue protein sequence, read N- to C-terminus: Ribosome maturation factor RimP (153 aa).

Belongs to the RimP family.

It localises to the cytoplasm. Functionally, required for maturation of 30S ribosomal subunits. The polypeptide is Ribosome maturation factor RimP (Christiangramia forsetii (strain DSM 17595 / CGMCC 1.15422 / KT0803) (Gramella forsetii)).